A 335-amino-acid chain; its full sequence is Methionine import ATP-binding protein MetN 2 (335 aa).

An ABC transporter domain is found at Ile2–Val242. ATP is bound at residue Gly38–Ser45.

The protein belongs to the ABC transporter superfamily. Methionine importer (TC 3.A.1.24) family. The complex is composed of two ATP-binding proteins (MetN), two transmembrane proteins (MetI) and a solute-binding protein (MetQ).

The protein localises to the cell inner membrane. The catalysed reaction is L-methionine(out) + ATP + H2O = L-methionine(in) + ADP + phosphate + H(+). It catalyses the reaction D-methionine(out) + ATP + H2O = D-methionine(in) + ADP + phosphate + H(+). Part of the ABC transporter complex MetNIQ involved in methionine import. Responsible for energy coupling to the transport system. The protein is Methionine import ATP-binding protein MetN 2 of Pseudomonas aeruginosa (strain UCBPP-PA14).